Reading from the N-terminus, the 253-residue chain is Probable transcriptional regulatory protein RC0681 (253 aa).

Residues 1–21 (MAGHSKFKNIQHRKGAQDKKR) form a disordered region.

The protein belongs to the TACO1 family.

It localises to the cytoplasm. The polypeptide is Probable transcriptional regulatory protein RC0681 (Rickettsia conorii (strain ATCC VR-613 / Malish 7)).